The sequence spans 200 residues: Recombination protein RecR (200 aa).

The segment at 57–72 (CEHCRTFTEEDICSIC) adopts a C4-type zinc-finger fold. The Toprim domain maps to 81-176 (RLLCVVEMPA…KVSRIAHGIP (96 aa)).

This sequence belongs to the RecR family.

Its function is as follows. May play a role in DNA repair. It seems to be involved in an RecBC-independent recombinational process of DNA repair. It may act with RecF and RecO. The chain is Recombination protein RecR from Mannheimia succiniciproducens (strain KCTC 0769BP / MBEL55E).